The following is a 169-amino-acid chain: Der GTPase-activating protein YihI (169 aa).

2 disordered regions span residues 1–83 (MNPL…PTKP) and 150–169 (DEEEREEEKQDDIMQLLKGN). Basic and acidic residues predominate over residues 21–30 (NREELNAEGR). Basic residues predominate over residues 31–40 (ARKREKKHRG). 2 stretches are compositionally biased toward basic and acidic residues: residues 51-66 (SGDKHPSGKQQRDPRL) and 150-161 (DEEEREEEKQDD).

It belongs to the YihI family. As to quaternary structure, interacts with Der.

A GTPase-activating protein (GAP) that modifies Der/EngA GTPase function. May play a role in ribosome biogenesis. The protein is Der GTPase-activating protein YihI of Photorhabdus laumondii subsp. laumondii (strain DSM 15139 / CIP 105565 / TT01) (Photorhabdus luminescens subsp. laumondii).